Reading from the N-terminus, the 143-residue chain is Transcriptional regulator MraZ (143 aa).

SpoVT-AbrB domains are found at residues 5 to 47 and 76 to 119; these read TYTP…PREE and TDEQ…DAQA.

Belongs to the MraZ family. In terms of assembly, forms oligomers.

The protein localises to the cytoplasm. The protein resides in the nucleoid. The sequence is that of Transcriptional regulator MraZ from Rhodococcus opacus (strain B4).